We begin with the raw amino-acid sequence, 501 residues long: Cobyric acid synthase (501 aa).

The region spanning 252–443 (DLDVAVIDLD…LHGIFDNPYW (192 aa)) is the GATase cobBQ-type domain. The active-site Nucleophile is Cys333. His435 is an active-site residue.

The protein belongs to the CobB/CobQ family. CobQ subfamily.

It functions in the pathway cofactor biosynthesis; adenosylcobalamin biosynthesis. Catalyzes amidations at positions B, D, E, and G on adenosylcobyrinic A,C-diamide. NH(2) groups are provided by glutamine, and one molecule of ATP is hydrogenolyzed for each amidation. The polypeptide is Cobyric acid synthase (Limosilactobacillus reuteri (strain DSM 20016) (Lactobacillus reuteri)).